A 492-amino-acid polypeptide reads, in one-letter code: Ribose import ATP-binding protein RbsA (492 aa).

2 ABC transporter domains span residues isoleucine 3–lysine 239 and arginine 238–lysine 492. Position 35 to 42 (glycine 35 to serine 42) interacts with ATP.

The protein belongs to the ABC transporter superfamily. Ribose importer (TC 3.A.1.2.1) family. As to quaternary structure, the complex is composed of an ATP-binding protein (RbsA), two transmembrane proteins (RbsC) and a solute-binding protein (RbsB).

It localises to the cell membrane. The catalysed reaction is D-ribose(out) + ATP + H2O = D-ribose(in) + ADP + phosphate + H(+). In terms of biological role, part of the ABC transporter complex RbsABC involved in ribose import. Responsible for energy coupling to the transport system. This chain is Ribose import ATP-binding protein RbsA, found in Streptococcus agalactiae serotype Ia (strain ATCC 27591 / A909 / CDC SS700).